The sequence spans 84 residues: Cell division topological specificity factor (84 aa).

It belongs to the MinE family.

Prevents the cell division inhibition by proteins MinC and MinD at internal division sites while permitting inhibition at polar sites. This ensures cell division at the proper site by restricting the formation of a division septum at the midpoint of the long axis of the cell. This Pseudomonas entomophila (strain L48) protein is Cell division topological specificity factor.